Reading from the N-terminus, the 156-residue chain is Small ribosomal subunit protein uS7 (156 aa).

This sequence belongs to the universal ribosomal protein uS7 family. In terms of assembly, part of the 30S ribosomal subunit. Contacts proteins S9 and S11.

Its function is as follows. One of the primary rRNA binding proteins, it binds directly to 16S rRNA where it nucleates assembly of the head domain of the 30S subunit. Is located at the subunit interface close to the decoding center, probably blocks exit of the E-site tRNA. The chain is Small ribosomal subunit protein uS7 from Buchnera aphidicola subsp. Acyrthosiphon pisum (strain Tuc7).